The primary structure comprises 958 residues: MASSLDLLKLISERGADSRGASDIVEQQAVKQLLEQVDYSKRSKKINIRNKLTPDEENAFRARYGGAFDLNLTQQYNAPHSLAGALRIAEHYDCLSSFPPLDPIIDFGGSWWHHYSRKDTRIHSCCPVLGVRDAARHEERLCRMRKLLQECDDREDLPDFCIDRAESCSVQADWAICIHGGYDMGYTGLCEAMHSHGVRILRGTIMFDGAMLFDNEGVLPLLKCRWMKSGKGKSEVIKFDFMNESTLSYIHSWTNLGSFLTESVHVIGGTTYLLERELLKCNIMTYKIVATNLKCPKETLRHCVWFENISQYVAVNIPEDWNLTHWKPVRVAKTTVREVEEIAFRCFKENKEWTENMKAIASILSAKSSTVIINGQAIMAGERLNIDEYHLVAFALTMNLYQKYENIRNFYSEMEWKGWVNHFKTRFWWGGSTATSSTGKIREFLAGKFPWLRLDSYKDSFVFLSKISDVKEFENDSVPISRLRSFFSSEDLMERIELELESAQKRRREKKKKEVEKIDEEEFQDAIDIPNDAVRDDAKPEKEPKPEVTVGAEPTGPEEASRHFAIKEFSDYCRRLDCNAVSNLRRLWAIAGCDGRTARNKSILETYHRVDDMINLHYPGGQWLYPKKYDYEVGFNDSGLGPKFDDELYVVDKSCICANYQVLSKNTDSLKAPSCKISLCDGVAGCGKTTAIKSASNIAEHLVVTANKKSAEDVREALFPHNPSSEIAFKVIRTADSALMHGLPRCKRLLVDEAGLLHYGQLLAVAALCKCQSVLAFGDTEQISFKSRDATFRLKYGDLQFDSRDIVTETWRCPQDVISAVQTLKRGGNRTSKYLGWKSHSKVSRSISHKEIASPLQVTLSREKFYLTMTQADKAALVSRAKDFPELDKAWIEKHIKTVHEAQGVSVDHAVLVRLKSTKCDLFKTEEYCLVALTRHKITFEYLYVGMLSGDLIFRSIS.

The methyltransferase stretch occupies residues 49–380 (RNKLTPDEEN…VIINGQAIMA (332 aa)). In terms of domain architecture, Alphavirus-like MT spans 71 to 260 (NLTQQYNAPH…HSWTNLGSFL (190 aa)). The interval 529-557 (IPNDAVRDDAKPEKEPKPEVTVGAEPTGP) is disordered. Over residues 533–546 (AVRDDAKPEKEPKP) the composition is skewed to basic and acidic residues. The region spanning 652 to 807 (DKSCICANYQ…DLQFDSRDIV (156 aa)) is the (+)RNA virus helicase ATP-binding domain. The ATP-dependent helicase stretch occupies residues 680–943 (CDGVAGCGKT…TRHKITFEYL (264 aa)). Residue 682–689 (GVAGCGKT) coordinates ATP. Positions 808–958 (TETWRCPQDV…SGDLIFRSIS (151 aa)) constitute a (+)RNA virus helicase C-terminal domain.

This sequence belongs to the bromoviridae replication protein 1a family. Interacts with RNA-directed RNA polymerase 2a.

It localises to the host endoplasmic reticulum membrane. Its function is as follows. Involved in the virus replication. Contains a helicase domain and a methyltransferase domain. The methyltransferase domain is probably involved in viral RNA capping. Involved in the formation of ER membrane spherular invaginations in which RNA replication complexes form. This Cowpea chlorotic mottle virus (CCMV) protein is Replication protein 1a.